Consider the following 315-residue polypeptide: tRNA-cytidine(32) 2-sulfurtransferase (315 aa).

The PP-loop motif signature appears at 54–59; that stretch reads SGGKDS. Positions 129, 132, and 220 each coordinate [4Fe-4S] cluster.

The protein belongs to the TtcA family. In terms of assembly, homodimer. Mg(2+) is required as a cofactor. Requires [4Fe-4S] cluster as cofactor.

It is found in the cytoplasm. It catalyses the reaction cytidine(32) in tRNA + S-sulfanyl-L-cysteinyl-[cysteine desulfurase] + AH2 + ATP = 2-thiocytidine(32) in tRNA + L-cysteinyl-[cysteine desulfurase] + A + AMP + diphosphate + H(+). Its pathway is tRNA modification. Its function is as follows. Catalyzes the ATP-dependent 2-thiolation of cytidine in position 32 of tRNA, to form 2-thiocytidine (s(2)C32). The sulfur atoms are provided by the cysteine/cysteine desulfurase (IscS) system. The protein is tRNA-cytidine(32) 2-sulfurtransferase of Bordetella avium (strain 197N).